A 452-amino-acid polypeptide reads, in one-letter code: tRNA modification GTPase MnmE (452 aa).

Positions 24, 81, and 120 each coordinate (6S)-5-formyl-5,6,7,8-tetrahydrofolate. Positions 217 to 373 (GIKTAIVGKT…LIMKIEQMHI (157 aa)) constitute a TrmE-type G domain. N227 is a binding site for K(+). Residues 227–232 (NVGKSS), 246–252 (TDIHGTT), and 271–274 (DTAG) each bind GTP. S231 lines the Mg(2+) pocket. Residues T246, I248, and T251 each coordinate K(+). Mg(2+) is bound at residue T252. Position 452 (K452) interacts with (6S)-5-formyl-5,6,7,8-tetrahydrofolate.

The protein belongs to the TRAFAC class TrmE-Era-EngA-EngB-Septin-like GTPase superfamily. TrmE GTPase family. As to quaternary structure, homodimer. Heterotetramer of two MnmE and two MnmG subunits. K(+) is required as a cofactor.

The protein localises to the cytoplasm. Its function is as follows. Exhibits a very high intrinsic GTPase hydrolysis rate. Involved in the addition of a carboxymethylaminomethyl (cmnm) group at the wobble position (U34) of certain tRNAs, forming tRNA-cmnm(5)s(2)U34. The sequence is that of tRNA modification GTPase MnmE from Mesoplasma florum (strain ATCC 33453 / NBRC 100688 / NCTC 11704 / L1) (Acholeplasma florum).